Consider the following 133-residue polypeptide: Small ribosomal subunit protein uS8 (133 aa).

The protein belongs to the universal ribosomal protein uS8 family. As to quaternary structure, part of the 30S ribosomal subunit.

Its function is as follows. One of the primary rRNA binding proteins, it binds directly to 16S rRNA central domain where it helps coordinate assembly of the platform of the 30S subunit. In Metallosphaera sedula (strain ATCC 51363 / DSM 5348 / JCM 9185 / NBRC 15509 / TH2), this protein is Small ribosomal subunit protein uS8.